A 332-amino-acid polypeptide reads, in one-letter code: Thiamine thiazole synthase (332 aa).

Substrate-binding positions include C87, 108 to 109 (EA), G116, and V184. At C221 the chain carries 2,3-didehydroalanine (Cys). Substrate is bound by residues D223, H238, M290, and 300–302 (RMG).

The protein belongs to the THI4 family. Homooctamer. It depends on Fe cation as a cofactor. During the catalytic reaction, a sulfide is transferred from Cys-221 to a reaction intermediate, generating a dehydroalanine residue.

It is found in the cytoplasm. Its subcellular location is the nucleus. The enzyme catalyses [ADP-thiazole synthase]-L-cysteine + glycine + NAD(+) = [ADP-thiazole synthase]-dehydroalanine + ADP-5-ethyl-4-methylthiazole-2-carboxylate + nicotinamide + 3 H2O + 2 H(+). Its function is as follows. Involved in biosynthesis of the thiamine precursor thiazole. Catalyzes the conversion of NAD and glycine to adenosine diphosphate 5-(2-hydroxyethyl)-4-methylthiazole-2-carboxylic acid (ADT), an adenylated thiazole intermediate. The reaction includes an iron-dependent sulfide transfer from a conserved cysteine residue of the protein to a thiazole intermediate. The enzyme can only undergo a single turnover, which suggests it is a suicide enzyme. May have additional roles in adaptation to various stress conditions and in DNA damage tolerance. The chain is Thiamine thiazole synthase from Aspergillus fumigatus (strain ATCC MYA-4609 / CBS 101355 / FGSC A1100 / Af293) (Neosartorya fumigata).